We begin with the raw amino-acid sequence, 361 residues long: Aminomethyltransferase (361 aa).

This sequence belongs to the GcvT family. As to quaternary structure, the glycine cleavage system is composed of four proteins: P, T, L and H.

The catalysed reaction is N(6)-[(R)-S(8)-aminomethyldihydrolipoyl]-L-lysyl-[protein] + (6S)-5,6,7,8-tetrahydrofolate = N(6)-[(R)-dihydrolipoyl]-L-lysyl-[protein] + (6R)-5,10-methylene-5,6,7,8-tetrahydrofolate + NH4(+). Functionally, the glycine cleavage system catalyzes the degradation of glycine. This chain is Aminomethyltransferase, found in Bacteroides thetaiotaomicron (strain ATCC 29148 / DSM 2079 / JCM 5827 / CCUG 10774 / NCTC 10582 / VPI-5482 / E50).